The sequence spans 858 residues: Transcription factor pytR (858 aa).

The tract at residues 1-35 is disordered; the sequence is MAHFSRVASDPSLAPQPSAPSGLDSSTTSSSSTGL. A DNA-binding region (zn(2)-C6 fungal-type) is located at residues 39-65; the sequence is CTFCRARKIRCSSGPICSACRERNINC. The tract at residues 72-99 is disordered; that stretch reads RKGRPRRRGTNTSNAQAKKGDQENPTLG.

It localises to the nucleus. In terms of biological role, transcription factor that regulates the expression of the gene cluster that mediates the biosynthesis of Pyranterreones, a family of antioxidative compounds. In Aspergillus terreus (strain NIH 2624 / FGSC A1156), this protein is Transcription factor pytR.